We begin with the raw amino-acid sequence, 492 residues long: 3-octaprenyl-4-hydroxybenzoate carboxy-lyase (492 aa).

Asn-175 is a binding site for Mn(2+). Prenylated FMN contacts are provided by residues 178–180 (IYR), 192–194 (RWL), and 197–198 (RG). Glu-241 contributes to the Mn(2+) binding site. The Proton donor role is filled by Asp-290.

The protein belongs to the UbiD family. Homohexamer. Requires prenylated FMN as cofactor. The cofactor is Mn(2+).

It is found in the cell membrane. The enzyme catalyses a 4-hydroxy-3-(all-trans-polyprenyl)benzoate + H(+) = a 2-(all-trans-polyprenyl)phenol + CO2. Its pathway is cofactor biosynthesis; ubiquinone biosynthesis. Functionally, catalyzes the decarboxylation of 3-octaprenyl-4-hydroxy benzoate to 2-octaprenylphenol, an intermediate step in ubiquinone biosynthesis. The polypeptide is 3-octaprenyl-4-hydroxybenzoate carboxy-lyase (Salmonella paratyphi A (strain ATCC 9150 / SARB42)).